A 273-amino-acid polypeptide reads, in one-letter code: Ribosomal RNA small subunit methyltransferase A (273 aa).

Residues asparagine 18, leucine 20, glycine 45, glutamate 66, aspartate 91, and asparagine 113 each contribute to the S-adenosyl-L-methionine site.

This sequence belongs to the class I-like SAM-binding methyltransferase superfamily. rRNA adenine N(6)-methyltransferase family. RsmA subfamily.

It is found in the cytoplasm. The enzyme catalyses adenosine(1518)/adenosine(1519) in 16S rRNA + 4 S-adenosyl-L-methionine = N(6)-dimethyladenosine(1518)/N(6)-dimethyladenosine(1519) in 16S rRNA + 4 S-adenosyl-L-homocysteine + 4 H(+). Its function is as follows. Specifically dimethylates two adjacent adenosines (A1518 and A1519) in the loop of a conserved hairpin near the 3'-end of 16S rRNA in the 30S particle. May play a critical role in biogenesis of 30S subunits. The sequence is that of Ribosomal RNA small subunit methyltransferase A from Erwinia tasmaniensis (strain DSM 17950 / CFBP 7177 / CIP 109463 / NCPPB 4357 / Et1/99).